The following is a 1472-amino-acid chain: Gag-Pol polyprotein (1472 aa).

A lipid anchor (N-myristoyl glycine; by host) is attached at G2. The Nuclear export signal signature appears at 16 to 22 (FEKIRLR). Residues 26 to 32 (KKKYQIK) carry the Nuclear localization signal motif. 2 disordered regions span residues 115-135 (EKAA…SRNY) and 215-234 (DRTH…RDPT). A Phosphotyrosine; by host modification is found at Y135. 2 consecutive CCHC-type zinc fingers follow at residues 390–407 (LKCF…ECKA) and 411–428 (IKCF…DCKN). A disordered region spans residues 454 to 500 (HSWSGTNSPPNGNSLRSSKEAPPAVCREGTAPERGERTDKETEGERS). Residues 456 to 469 (WSGTNSPPNGNSLR) are compositionally biased toward polar residues. Basic and acidic residues predominate over residues 483–499 (TAPERGERTDKETEGER). In terms of domain architecture, Peptidase A2 spans 524–597 (VQALLDTGAD…TPINIIGRNI (74 aa)). Residue D529 is the For protease activity; shared with dimeric partner of the active site. Residues 653-843 (EGKLSRIGGE…PPWEWMGYKL (191 aa)) enclose the Reverse transcriptase domain. Positions 719, 794, and 795 each coordinate Mg(2+). The RT 'primer grip' stretch occupies residues 836 to 844 (WEWMGYKLH). The Tryptophan repeat motif motif lies at 1007 to 1023 (WDMWWQDYWQVSWIPEW). The RNase H type-1 domain occupies 1043 to 1166 (IKGEDVYYVD…IDKLVSKGIR (124 aa)). Residues D1052, E1087, D1107, and D1158 each contribute to the Mg(2+) site. The segment at 1172–1213 (DRIEEAQDDHAKYHNNWRSMVQEFGLPNIVAKEIVAACPKCQ) adopts an Integrase-type zinc-finger fold. Zn(2+)-binding residues include H1181, H1185, C1209, and C1212. The 151-residue stretch at 1223-1373 (VDASIETWQM…SSAERLVNML (151 aa)) folds into the Integrase catalytic domain. D1233 and D1285 together coordinate Mg(2+). Residues 1392–1439 (FKVYYREGRDPVWKGPARLIWKGEGAVVIKEGEDIKVVPRRKAKIIKD) constitute a DNA-binding region (integrase-type). The segment at 1440-1472 (YGERKTMDSEGSMEGVREANKQMEGDSDLQDQE) is disordered. Basic and acidic residues predominate over residues 1454–1463 (GVREANKQME).

Homotrimer. Interacts with gp41 (via C-terminus). In terms of assembly, homodimer. The active site consists of two apposed aspartic acid residues. As to quaternary structure, heterodimer of p66 RT and p51 RT (RT p66/p51). Heterodimerization of RT is essential for DNA polymerase activity. Despite the sequence identities, p66 RT and p51 RT have distinct folding. Homotetramer; may further associate as a homohexadecamer. Mg(2+) is required as a cofactor. Specific enzymatic cleavages by the viral protease yield mature proteins. The protease is released by autocatalytic cleavage. The polyprotein is cleaved during and after budding, this process is termed maturation. Proteolytic cleavage of p66 RT removes the RNase H domain to yield the p51 RT subunit. Post-translationally, capsid protein p24 is phosphorylated.

It localises to the virion. The protein localises to the host nucleus. It is found in the host cytoplasm. The protein resides in the host cell membrane. The enzyme catalyses Specific for a P1 residue that is hydrophobic, and P1' variable, but often Pro.. It carries out the reaction Endohydrolysis of RNA in RNA/DNA hybrids. Three different cleavage modes: 1. sequence-specific internal cleavage of RNA. Human immunodeficiency virus type 1 and Moloney murine leukemia virus enzymes prefer to cleave the RNA strand one nucleotide away from the RNA-DNA junction. 2. RNA 5'-end directed cleavage 13-19 nucleotides from the RNA end. 3. DNA 3'-end directed cleavage 15-20 nucleotides away from the primer terminus.. The catalysed reaction is 3'-end directed exonucleolytic cleavage of viral RNA-DNA hybrid.. It catalyses the reaction DNA(n) + a 2'-deoxyribonucleoside 5'-triphosphate = DNA(n+1) + diphosphate. The viral protease is inhibited by many synthetic protease inhibitors (PIs), such as amprenavir, atazanavir, indinavir, loprinavir, nelfinavir, ritonavir and saquinavir. RT can be inhibited either by nucleoside RT inhibitors (NRTIs) or by non nucleoside RT inhibitors (NNRTIs). NRTIs act as chain terminators, whereas NNRTIs inhibit DNA polymerization by binding a small hydrophobic pocket near the RT active site and inducing an allosteric change in this region. Classical NRTIs are abacavir, adefovir (PMEA), didanosine (ddI), lamivudine (3TC), stavudine (d4T), tenofovir (PMPA), zalcitabine (ddC), and zidovudine (AZT). Classical NNRTIs are atevirdine (BHAP U-87201E), delavirdine, efavirenz (DMP-266), emivirine (I-EBU), and nevirapine (BI-RG-587). The tritherapies used as a basic effective treatment of AIDS associate two NRTIs and one NNRTI. Use of protease inhibitors in tritherapy regimens permit more ambitious therapeutic strategies. In terms of biological role, gag-Pol polyprotein and Gag polyprotein may regulate their own translation, by the binding genomic RNA in the 5'-UTR. At low concentration, Gag-Pol and Gag would promote translation, whereas at high concentration, the polyproteins encapsidate genomic RNA and then shut off translation. Its function is as follows. Matrix protein p17 has two main functions: in infected cell, it targets Gag and Gag-pol polyproteins to the plasma membrane via a multipartite membrane-binding signal, that includes its myristointegration complex. The myristoylation signal and the NLS exert conflicting influences its subcellular localization. The key regulation of these motifs might be phosphorylation of a portion of MA molecules on the C-terminal tyrosine at the time of virus maturation, by virion-associated cellular tyrosine kinase. Implicated in the release from host cell mediated by Vpu. Capsid protein p24 forms the conical core that encapsulates the genomic RNA-nucleocapsid complex in the virion. The core is constituted by capsid protein hexamer subunits. The core is disassembled soon after virion entry. Interaction with host PPIA/CYPA protects the virus from restriction by host TRIM5-alpha and from an unknown antiviral activity in host cells. This capsid restriction by TRIM5 is one of the factors which restricts SIV to the simian species. Functionally, nucleocapsid protein p7 encapsulates and protects viral dimeric unspliced (genomic) RNA. Binds these RNAs through its zinc fingers. Facilitates rearangement of nucleic acid secondary structure during retrotranscription of genomic RNA. This capability is referred to as nucleic acid chaperone activity. In terms of biological role, the aspartyl protease mediates proteolytic cleavages of Gag and Gag-Pol polyproteins during or shortly after the release of the virion from the plasma membrane. Cleavages take place as an ordered, step-wise cascade to yield mature proteins. This process is called maturation. Displays maximal activity during the budding process just prior to particle release from the cell. Also cleaves Nef and Vif, probably concomitantly with viral structural proteins on maturation of virus particles. Hydrolyzes host EIF4GI and PABP1 in order to shut off the capped cellular mRNA translation. The resulting inhibition of cellular protein synthesis serves to ensure maximal viral gene expression and to evade host immune response. Its function is as follows. Reverse transcriptase/ribonuclease H (RT) is a multifunctional enzyme that converts the viral dimeric RNA genome into dsDNA in the cytoplasm, shortly after virus entry into the cell. This enzyme displays a DNA polymerase activity that can copy either DNA or RNA templates, and a ribonuclease H (RNase H) activity that cleaves the RNA strand of RNA-DNA heteroduplexes in a partially processive 3' to 5' endonucleasic mode. Conversion of viral genomic RNA into dsDNA requires many steps. A tRNA binds to the primer-binding site (PBS) situated at the 5'-end of the viral RNA. RT uses the 3' end of the tRNA primer to perform a short round of RNA-dependent minus-strand DNA synthesis. The reading proceeds through the U5 region and ends after the repeated (R) region which is present at both ends of viral RNA. The portion of the RNA-DNA heteroduplex is digested by the RNase H, resulting in a ssDNA product attached to the tRNA primer. This ssDNA/tRNA hybridizes with the identical R region situated at the 3' end of viral RNA. This template exchange, known as minus-strand DNA strong stop transfer, can be either intra- or intermolecular. RT uses the 3' end of this newly synthesized short ssDNA to perform the RNA-dependent minus-strand DNA synthesis of the whole template. RNase H digests the RNA template except for two polypurine tracts (PPTs) situated at the 5'-end and near the center of the genome. It is not clear if both polymerase and RNase H activities are simultaneous. RNase H can probably proceed both in a polymerase-dependent (RNA cut into small fragments by the same RT performing DNA synthesis) and a polymerase-independent mode (cleavage of remaining RNA fragments by free RTs). Secondly, RT performs DNA-directed plus-strand DNA synthesis using the PPTs that have not been removed by RNase H as primers. PPTs and tRNA primers are then removed by RNase H. The 3' and 5' ssDNA PBS regions hybridize to form a circular dsDNA intermediate. Strand displacement synthesis by RT to the PBS and PPT ends produces a blunt ended, linear dsDNA copy of the viral genome that includes long terminal repeats (LTRs) at both ends. Integrase catalyzes viral DNA integration into the host chromosome, by performing a series of DNA cutting and joining reactions. This enzyme activity takes place after virion entry into a cell and reverse transcription of the RNA genome in dsDNA. The first step in the integration process is 3' processing. This step requires a complex comprising the viral genome, matrix protein, Vpr and integrase. This complex is called the pre-integration complex (PIC). The integrase protein removes 2 nucleotides from each 3' end of the viral DNA, leaving recessed CA OH's at the 3' ends. In the second step, the PIC enters cell nucleus. This process is mediated through integrase and Vpr proteins, and allows the virus to infect a non dividing cell. This ability to enter the nucleus is specific of lentiviruses, other retroviruses cannot and rely on cell division to access cell chromosomes. In the third step, termed strand transfer, the integrase protein joins the previously processed 3' ends to the 5' ends of strands of target cellular DNA at the site of integration. The 5'-ends are produced by integrase-catalyzed staggered cuts, 5 bp apart. A Y-shaped, gapped, recombination intermediate results, with the 5'-ends of the viral DNA strands and the 3' ends of target DNA strands remaining unjoined, flanking a gap of 5 bp. The last step is viral DNA integration into host chromosome. This involves host DNA repair synthesis in which the 5 bp gaps between the unjoined strands are filled in and then ligated. Since this process occurs at both cuts flanking the SIV genome, a 5 bp duplication of host DNA is produced at the ends of SIV integration. Alternatively, Integrase may catalyze the excision of viral DNA just after strand transfer, this is termed disintegration. The chain is Gag-Pol polyprotein (gag-pol) from Simian immunodeficiency virus agm.grivet (isolate AGM gr-1) (SIV-agm.gri).